The chain runs to 435 residues: Gamma-glutamyl phosphate reductase (435 aa).

Belongs to the gamma-glutamyl phosphate reductase family.

It is found in the cytoplasm. It carries out the reaction L-glutamate 5-semialdehyde + phosphate + NADP(+) = L-glutamyl 5-phosphate + NADPH + H(+). It participates in amino-acid biosynthesis; L-proline biosynthesis; L-glutamate 5-semialdehyde from L-glutamate: step 2/2. Catalyzes the NADPH-dependent reduction of L-glutamate 5-phosphate into L-glutamate 5-semialdehyde and phosphate. The product spontaneously undergoes cyclization to form 1-pyrroline-5-carboxylate. The protein is Gamma-glutamyl phosphate reductase of Nostoc punctiforme (strain ATCC 29133 / PCC 73102).